Consider the following 469-residue polypeptide: Tryptophan biosynthesis protein TrpCF (469 aa).

The tract at residues 1–271 (MSEQLSEHIS…LAVRKIVLGE (271 aa)) is indole-3-glycerol phosphate synthase. Positions 272-469 (HKVCGLTHPD…QQVFQQLRNY (198 aa)) are N-(5'-phosphoribosyl)anthranilate isomerase.

In the N-terminal section; belongs to the TrpC family. The protein in the C-terminal section; belongs to the TrpF family. In terms of assembly, monomer.

The enzyme catalyses N-(5-phospho-beta-D-ribosyl)anthranilate = 1-(2-carboxyphenylamino)-1-deoxy-D-ribulose 5-phosphate. It catalyses the reaction 1-(2-carboxyphenylamino)-1-deoxy-D-ribulose 5-phosphate + H(+) = (1S,2R)-1-C-(indol-3-yl)glycerol 3-phosphate + CO2 + H2O. It functions in the pathway amino-acid biosynthesis; L-tryptophan biosynthesis; L-tryptophan from chorismate: step 3/5. The protein operates within amino-acid biosynthesis; L-tryptophan biosynthesis; L-tryptophan from chorismate: step 4/5. Functionally, bifunctional enzyme that catalyzes two sequential steps of tryptophan biosynthetic pathway. The first reaction is catalyzed by the isomerase, coded by the TrpF domain; the second reaction is catalyzed by the synthase, coded by the TrpC domain. This is Tryptophan biosynthesis protein TrpCF (trpCF) from Vibrio cholerae serotype O1 (strain ATCC 39315 / El Tor Inaba N16961).